We begin with the raw amino-acid sequence, 403 residues long: Phosphoglycerate kinase (403 aa).

Residues 24 to 26 (DLN), R39, 62 to 65 (HLGR), R121, and R161 contribute to the substrate site. ATP contacts are provided by residues K211, G299, E330, and 359 to 362 (GGDS).

This sequence belongs to the phosphoglycerate kinase family. As to quaternary structure, monomer.

It localises to the cytoplasm. The enzyme catalyses (2R)-3-phosphoglycerate + ATP = (2R)-3-phospho-glyceroyl phosphate + ADP. It functions in the pathway carbohydrate degradation; glycolysis; pyruvate from D-glyceraldehyde 3-phosphate: step 2/5. The polypeptide is Phosphoglycerate kinase (Corynebacterium jeikeium (strain K411)).